Consider the following 219-residue polypeptide: Large ribosomal subunit protein uL3 (219 aa).

Residue glutamine 151 is modified to N5-methylglutamine.

It belongs to the universal ribosomal protein uL3 family. As to quaternary structure, part of the 50S ribosomal subunit. Forms a cluster with proteins L14 and L19. Methylated by PrmB.

Its function is as follows. One of the primary rRNA binding proteins, it binds directly near the 3'-end of the 23S rRNA, where it nucleates assembly of the 50S subunit. The protein is Large ribosomal subunit protein uL3 of Blochmanniella floridana.